A 383-amino-acid polypeptide reads, in one-letter code: MGLSADLFVQKRSAASSLKQPKELGFYSKTQEGQFLVNDSSKLSYYYLPDTELERNLDLCSGIKKFKECFGNPDVDACTLSGLLKTIQAYEERKNKKVPADIITFRGIMRKLISAAFDSPKYNRVDLRVLSFNGQLFIREPNQAHPPPANTSSMEYRSYYSGYKFETLSTISKPLPQVTRNSLEKRHKRICCNGDQYITVVRSGVGHCKLVLGAEVDCVFDFTEDSSDNLKHYAELKCTKGVSTFAEARAFERKMFKTWLQCFLVGINRVIYGFRDENFILRSVEEYSTQEVPLLLKNNNPQLTNACMDAVRWYGALTEWLLSSIPREESAEHIRAYRLTFENNHLKLVEIEKSDTEYDQLVNGEGILTSEFREWRKSLNKSL.

Residue E166 coordinates a divalent metal cation. E215 is a substrate binding site. Residues D217, E235, and L236 each coordinate a divalent metal cation. 2 residues coordinate substrate: K237 and Q261.

It belongs to the DXO/Dom3Z family. Interacts with RAT1; the interaction is direct, stabilizes RAT1 protein structure and stimulates its exoribonuclease activity. The interaction also stimulates RAI1 pyrophosphohydrolase activity, probably by recruiting it to mRNA substrates. The cofactor is a divalent metal cation.

The protein resides in the nucleus. It catalyses the reaction a 5'-end NAD(+)-phospho-ribonucleoside in mRNA + H2O = a 5'-end phospho-ribonucleoside in mRNA + NAD(+) + H(+). It carries out the reaction a 5'-end (N(7)-methyl 5'-triphosphoguanosine)-ribonucleoside-ribonucleotide in mRNA + H2O = a (N(7)-methyl 5'-triphosphoguanosine)-nucleoside + a 5'-end phospho-ribonucleoside in mRNA + H(+). The catalysed reaction is a 5'-end triphospho-ribonucleoside in mRNA + H2O = a 5'-end phospho-ribonucleoside in mRNA + diphosphate + H(+). Functionally, decapping enzyme for NAD-capped RNAs: specifically hydrolyzes the nicotinamide adenine dinucleotide (NAD) cap from a subset of RNAs by removing the entire NAD moiety from the 5'-end of an NAD-capped RNA. The NAD-cap is present at the 5'-end of some RNAs and snoRNAs. In contrast to the canonical 5'-end N7 methylguanosine (m7G) cap, the NAD cap promotes mRNA decay. Also acts as a non-canonical decapping enzyme that removes the entire cap structure of m7G capped or incompletely capped RNAs. Has decapping activity toward incomplete 5'-end m7G cap mRNAs such as unmethylated 5'-end-capped RNA (cap0), while it has no activity toward 2'-O-ribose methylated m7G cap (cap1). Also possesses RNA 5'-pyrophosphohydrolase activity by hydrolyzing the 5'-end triphosphate to release pyrophosphates. Stimulates exoribonuclease activity of Rat1, allowing it to degrade RNAs with stable secondary structure more effectively. In Lachancea thermotolerans (strain ATCC 56472 / CBS 6340 / NRRL Y-8284) (Yeast), this protein is Decapping nuclease RAI1.